The chain runs to 914 residues: Neuropilin-1 (914 aa).

An N-terminal signal peptide occupies residues 1–18 (MDWGLFLHCAALTFTLSR). At 20–847 (LRSDKCGDTI…PGNVLKTLDP (828 aa)) the chain is on the extracellular side. 3 disulfide bridges follow: Cys-25/Cys-52, Cys-80/Cys-102, and Cys-145/Cys-171. 2 CUB domains span residues 25–139 (CGDT…YEVF) and 145–263 (CSRN…YSVS). N-linked (GlcNAc...) asparagine glycosylation occurs at Asn-148. Ca(2+) contacts are provided by Glu-193, Asp-207, and Asp-248. Residues Cys-204 and Cys-226 are joined by a disulfide bond. Asn-259 is a glycosylation site (N-linked (GlcNAc...) asparagine). Disulfide bonds link Cys-273–Cys-422 and Cys-429–Cys-581. F5/8 type C domains follow at residues 273–422 (CMEP…VYGC) and 429–581 (CSGM…LLGC). N-linked (GlcNAc...) asparagine glycosylation is present at Asn-520. Residue Ser-610 is glycosylated (O-linked (Xyl...) (chondroitin sulfate) serine; alternate). Ser-610 carries an O-linked (Xyl...) (heparan sulfate) serine; alternate glycan. The region spanning 636–801 (PYNLNCGFGW…NHISQEDCQK (166 aa)) is the MAM domain. Residues 809–829 (IVEEDPESNQTGFTPSYRTDE) are disordered. A compositionally biased stretch (polar residues) spans 816-825 (SNQTGFTPSY). Asn-817 carries an N-linked (GlcNAc...) asparagine glycan. Residues 848 to 870 (ILITIIAMSALGVLLGAICGVVL) form a helical membrane-spanning segment. The Cytoplasmic portion of the chain corresponds to 871 to 914 (YCACWHNGMSERNLSALENYNFELVDGVKLKKDKLNTQNSYSEA).

The protein belongs to the neuropilin family. As to quaternary structure, homodimer, and heterodimer. In terms of tissue distribution, developing nervous system; optic tectum (layers D and E of SGFS), amacrine cells of retina, neurites of dorsal root ganglia. Also expressed in non-neuronal cells, e.g. blood vessels in the entire embryo.

The protein resides in the mitochondrion membrane. It is found in the cell membrane. Its function is as follows. Receptor involved in the development of the cardiovascular system, in angiogenesis, in the formation of certain neuronal circuits and in organogenesis outside the nervous system. Mediates the chemorepulsant activity of semaphorins. Binding to VEGFA initiates a signaling pathway needed for motor neuron axon guidance and cell body migration, including for the caudal migration of facial motor neurons from rhombomere 4 to rhombomere 6 during embryonic development. Regulates mitochondrial iron transport via interaction. In Gallus gallus (Chicken), this protein is Neuropilin-1 (NRP1).